Reading from the N-terminus, the 172-residue chain is Glutamyl-tRNA(Gln) amidotransferase subunit C-4, mitochondrial (172 aa).

The transit peptide at 1-23 directs the protein to the mitochondrion; that stretch reads MIRIPFHLRQTPGRTLHSLVRSF. A disordered region spans residues 51–73; the sequence is PSKVPQRPHKSTIDGQSTPTRIP.

The protein belongs to the GatC family. Subunit of the heterotrimeric GatCAB amidotransferase (AdT) complex, composed of A, B and C subunits.

It is found in the mitochondrion. It catalyses the reaction L-glutamyl-tRNA(Gln) + L-glutamine + ATP + H2O = L-glutaminyl-tRNA(Gln) + L-glutamate + ADP + phosphate + H(+). In terms of biological role, allows the formation of correctly charged Gln-tRNA(Gln) through the transamidation of misacylated Glu-tRNA(Gln) in the mitochondria. The reaction takes place in the presence of glutamine and ATP through an activated gamma-phospho-Glu-tRNA(Gln). The chain is Glutamyl-tRNA(Gln) amidotransferase subunit C-4, mitochondrial from Culex quinquefasciatus (Southern house mosquito).